A 117-amino-acid polypeptide reads, in one-letter code: Large ribosomal subunit protein bL19 (117 aa).

It belongs to the bacterial ribosomal protein bL19 family.

Functionally, this protein is located at the 30S-50S ribosomal subunit interface and may play a role in the structure and function of the aminoacyl-tRNA binding site. The chain is Large ribosomal subunit protein bL19 from Thioalkalivibrio sulfidiphilus (strain HL-EbGR7).